A 121-amino-acid chain; its full sequence is UPF0344 protein BCA_1194 (121 aa).

4 helical membrane-spanning segments follow: residues 6–26 (ITAWALGLILFFVAYSLYSAG), 38–58 (LMYIIIIVTGFMLYMGIMKTA), 65–85 (WYGLKMVAGILVIGGMEMVLV), and 92–112 (ATGAVWGLFIVALVAVFYLGL).

This sequence belongs to the UPF0344 family.

Its subcellular location is the cell membrane. The polypeptide is UPF0344 protein BCA_1194 (Bacillus cereus (strain 03BB102)).